The sequence spans 285 residues: 4-hydroxybenzoate octaprenyltransferase (285 aa).

8 helical membrane passes run 28–48 (LWAMWMAAGGPPAWGLFWIFV), 86–106 (IAAWEALAVAAVLALVAFALV), 110–130 (NALTKWLAVVAAVVAGTYPFF), 133–153 (FFAIPQAYLGIAFGFGIPMAF), 165–185 (WLMLLANVFWAVAYDTAYAMV), 210–230 (IMLCYAAFLALMAWAGVLLGL), 232–252 (WPYWVGLAAAAGCAGYHYTLI), and 262–284 (AAFRHNNWLGACVFAGTAVAYAI).

The protein belongs to the UbiA prenyltransferase family. Mg(2+) is required as a cofactor.

The protein resides in the cell inner membrane. The enzyme catalyses all-trans-octaprenyl diphosphate + 4-hydroxybenzoate = 4-hydroxy-3-(all-trans-octaprenyl)benzoate + diphosphate. The protein operates within cofactor biosynthesis; ubiquinone biosynthesis. Functionally, catalyzes the prenylation of para-hydroxybenzoate (PHB) with an all-trans polyprenyl group. Mediates the second step in the final reaction sequence of ubiquinone-8 (UQ-8) biosynthesis, which is the condensation of the polyisoprenoid side chain with PHB, generating the first membrane-bound Q intermediate 3-octaprenyl-4-hydroxybenzoate. The protein is 4-hydroxybenzoate octaprenyltransferase of Cupriavidus necator (strain ATCC 17699 / DSM 428 / KCTC 22496 / NCIMB 10442 / H16 / Stanier 337) (Ralstonia eutropha).